The sequence spans 62 residues: Venom protein 51.1 (62 aa).

The first 25 residues, 1 to 25 (MKFFGILLIVTMVVLVMIATTYVES), serve as a signal peptide directing secretion. Cystine bridges form between C32-C53, C39-C58, and C43-C60.

Expressed by the venom gland.

The protein localises to the secreted. In terms of biological role, neurotoxin. Decreases the action potential of myelinated nerves in mice and frogs. This chain is Venom protein 51.1, found in Lychas mucronatus (Chinese swimming scorpion).